A 501-amino-acid polypeptide reads, in one-letter code: Aldehyde dehydrogenase, cytosolic 1 (501 aa).

Residue 246-251 (GSTEVG) coordinates NAD(+). The active-site Proton acceptor is the Glu-269. Residue Cys-303 is the Nucleophile of the active site.

It belongs to the aldehyde dehydrogenase family. As to quaternary structure, homotetramer. As to expression, eye specific, with very high expression in the lens.

The protein localises to the cytoplasm. The enzyme catalyses an aldehyde + NAD(+) + H2O = a carboxylate + NADH + 2 H(+). It functions in the pathway alcohol metabolism; ethanol degradation; acetate from ethanol: step 2/2. Functionally, major component of the eye of elephant shrews, which in contrast to other mammals, possesses both a lens- and a non-lens class-1 aldehyde dehydrogenase 1. This eye-specific form is a structural protein of the lens and, in other part of the eye, serves as the major form of ALDH1. Can convert/oxidize retinaldehyde to retinoic acid. This Macroscelides proboscideus (Short-eared elephant shrew) protein is Aldehyde dehydrogenase, cytosolic 1 (ALDH1).